Reading from the N-terminus, the 380-residue chain is Queuine tRNA-ribosyltransferase (380 aa).

Asp-96 acts as the Proton acceptor in catalysis. Substrate contacts are provided by residues 96-100, Asp-150, Gln-193, and Gly-220; that span reads DSGGF. Positions 251-257 are RNA binding; the sequence is GVGAPDS. Asp-270 (nucleophile) is an active-site residue. Residues 275–279 are RNA binding; important for wobble base 34 recognition; sequence TRIAR. Zn(2+) contacts are provided by Cys-308, Cys-310, Cys-313, and His-339.

Belongs to the queuine tRNA-ribosyltransferase family. In terms of assembly, homodimer. Within each dimer, one monomer is responsible for RNA recognition and catalysis, while the other monomer binds to the replacement base PreQ1. It depends on Zn(2+) as a cofactor.

The catalysed reaction is 7-aminomethyl-7-carbaguanine + guanosine(34) in tRNA = 7-aminomethyl-7-carbaguanosine(34) in tRNA + guanine. Its pathway is tRNA modification; tRNA-queuosine biosynthesis. Its function is as follows. Catalyzes the base-exchange of a guanine (G) residue with the queuine precursor 7-aminomethyl-7-deazaguanine (PreQ1) at position 34 (anticodon wobble position) in tRNAs with GU(N) anticodons (tRNA-Asp, -Asn, -His and -Tyr). Catalysis occurs through a double-displacement mechanism. The nucleophile active site attacks the C1' of nucleotide 34 to detach the guanine base from the RNA, forming a covalent enzyme-RNA intermediate. The proton acceptor active site deprotonates the incoming PreQ1, allowing a nucleophilic attack on the C1' of the ribose to form the product. After dissociation, two additional enzymatic reactions on the tRNA convert PreQ1 to queuine (Q), resulting in the hypermodified nucleoside queuosine (7-(((4,5-cis-dihydroxy-2-cyclopenten-1-yl)amino)methyl)-7-deazaguanosine). The protein is Queuine tRNA-ribosyltransferase of Streptococcus equi subsp. equi (strain 4047).